The chain runs to 407 residues: Phosphopentomutase (407 aa).

Residues D10, D306, H311, D347, H348, and H359 each contribute to the Mn(2+) site.

The protein belongs to the phosphopentomutase family. Mn(2+) is required as a cofactor.

Its subcellular location is the cytoplasm. It catalyses the reaction 2-deoxy-alpha-D-ribose 1-phosphate = 2-deoxy-D-ribose 5-phosphate. The enzyme catalyses alpha-D-ribose 1-phosphate = D-ribose 5-phosphate. The protein operates within carbohydrate degradation; 2-deoxy-D-ribose 1-phosphate degradation; D-glyceraldehyde 3-phosphate and acetaldehyde from 2-deoxy-alpha-D-ribose 1-phosphate: step 1/2. In terms of biological role, isomerase that catalyzes the conversion of deoxy-ribose 1-phosphate (dRib-1-P) and ribose 1-phosphate (Rib-1-P) to deoxy-ribose 5-phosphate (dRib-5-P) and ribose 5-phosphate (Rib-5-P), respectively. This Escherichia coli (strain UTI89 / UPEC) protein is Phosphopentomutase.